Consider the following 100-residue polypeptide: Small ribosomal subunit protein uS14c (100 aa).

Belongs to the universal ribosomal protein uS14 family. As to quaternary structure, part of the 30S ribosomal subunit.

Its subcellular location is the plastid. The protein localises to the chloroplast. In terms of biological role, binds 16S rRNA, required for the assembly of 30S particles. This chain is Small ribosomal subunit protein uS14c, found in Bigelowiella natans (Pedinomonas minutissima).